A 118-amino-acid polypeptide reads, in one-letter code: UPF0102 protein Bcav_2532 (118 aa).

This sequence belongs to the UPF0102 family.

The sequence is that of UPF0102 protein Bcav_2532 from Beutenbergia cavernae (strain ATCC BAA-8 / DSM 12333 / CCUG 43141 / JCM 11478 / NBRC 16432 / NCIMB 13614 / HKI 0122).